The primary structure comprises 25 residues: Large ribosomal subunit protein uL30 (25 aa).

Belongs to the universal ribosomal protein uL30 family. In terms of assembly, part of the 50S ribosomal subunit.

This chain is Large ribosomal subunit protein uL30 (rpmD), found in Pseudomonas putida (Arthrobacter siderocapsulatus).